The sequence spans 359 residues: Peptide chain release factor 1 (359 aa).

Residue Gln236 is modified to N5-methylglutamine. Residues 288 to 308 (QDEQDAERKSTIGTGDRSERI) form a disordered region. Positions 293–308 (AERKSTIGTGDRSERI) are enriched in basic and acidic residues.

The protein belongs to the prokaryotic/mitochondrial release factor family. In terms of processing, methylated by PrmC. Methylation increases the termination efficiency of RF1.

Its subcellular location is the cytoplasm. Functionally, peptide chain release factor 1 directs the termination of translation in response to the peptide chain termination codons UAG and UAA. The protein is Peptide chain release factor 1 of Streptococcus uberis (strain ATCC BAA-854 / 0140J).